Here is a 218-residue protein sequence, read N- to C-terminus: Hypoxanthine-guanine phosphoribosyltransferase (218 aa).

Ala2 bears the N-acetylalanine mark. Lys69 is a GMP binding site. An N6-acetyllysine modification is found at Lys103. Lys115 is covalently cross-linked (Glycyl lysine isopeptide (Lys-Gly) (interchain with G-Cter in SUMO1); alternate). Lys115 is covalently cross-linked (Glycyl lysine isopeptide (Lys-Gly) (interchain with G-Cter in SUMO2); alternate). GMP is bound by residues 134 to 142 (EDIIDTGKT), Lys166, 186 to 188 (KFV), and Asp194. The active-site Proton acceptor is the Asp138. Thr142 carries the phosphothreonine modification. Asp194 contributes to the Mg(2+) binding site.

The protein belongs to the purine/pyrimidine phosphoribosyltransferase family. Homotetramer. Requires Mg(2+) as cofactor.

It localises to the cytoplasm. It carries out the reaction IMP + diphosphate = hypoxanthine + 5-phospho-alpha-D-ribose 1-diphosphate. The enzyme catalyses GMP + diphosphate = guanine + 5-phospho-alpha-D-ribose 1-diphosphate. It participates in purine metabolism; IMP biosynthesis via salvage pathway; IMP from hypoxanthine: step 1/1. Converts guanine to guanosine monophosphate, and hypoxanthine to inosine monophosphate. Transfers the 5-phosphoribosyl group from 5-phosphoribosylpyrophosphate onto the purine. Plays a central role in the generation of purine nucleotides through the purine salvage pathway. In Bos taurus (Bovine), this protein is Hypoxanthine-guanine phosphoribosyltransferase (HPRT1).